We begin with the raw amino-acid sequence, 462 residues long: Phospho-2-dehydro-3-deoxyheptonate aldolase AroG (462 aa).

Cysteine 87 contributes to the Mn(2+) binding site. Phosphoenolpyruvate contacts are provided by residues arginine 126, 283–284 (ER), lysine 306, and arginine 337. Mn(2+) contacts are provided by histidine 369, glutamate 411, and aspartate 441.

In terms of assembly, homodimer. Interacts with Rv0948c. It depends on Mn(2+) as a cofactor. Co(2+) is required as a cofactor. The cofactor is Cd(2+).

The catalysed reaction is D-erythrose 4-phosphate + phosphoenolpyruvate + H2O = 7-phospho-2-dehydro-3-deoxy-D-arabino-heptonate + phosphate. The protein operates within metabolic intermediate biosynthesis; chorismate biosynthesis; chorismate from D-erythrose 4-phosphate and phosphoenolpyruvate: step 1/7. Its activity is regulated as follows. Feedback inhibited by tryptophan, tyrosine, phenylalanine and chorismate. Catalyzes an aldol-like condensation reaction between phosphoenolpyruvate (PEP) and D-erythrose 4-phosphate (E4P) to generate 3-deoxy-D-arabino-heptulosonate 7-phosphate (DAH7P) and inorganic phosphate. This chain is Phospho-2-dehydro-3-deoxyheptonate aldolase AroG (aroG), found in Mycobacterium tuberculosis (strain ATCC 25618 / H37Rv).